A 625-amino-acid chain; its full sequence is Probable potassium transport system protein Kup (625 aa).

12 helical membrane-spanning segments follow: residues 13 to 33, 53 to 73, 103 to 123, 141 to 161, 172 to 192, 206 to 226, 250 to 270, 282 to 302, 340 to 360, 369 to 389, 400 to 420, and 422 to 442; these read TALA…LYAL, ILSI…VAIV, IYMI…GIIT, VFDP…FLVQ, FGPI…HSVI, AIQF…AVVL, WFFV…ALLL, LLVP…ATVI, IYVP…ILIF, AYGL…AVFI, VLLL…ATSL, and ILSG…ILMT.

The protein belongs to the HAK/KUP transporter (TC 2.A.72) family.

It localises to the cell inner membrane. It catalyses the reaction K(+)(in) + H(+)(in) = K(+)(out) + H(+)(out). Transport of potassium into the cell. Likely operates as a K(+):H(+) symporter. In Acinetobacter baumannii (strain AYE), this protein is Probable potassium transport system protein Kup.